The chain runs to 156 residues: Putative thymidylate kinase (156 aa).

7–14 (GLDGTGKT) contacts ATP.

It belongs to the thymidylate kinase family.

The enzyme catalyses dTMP + ATP = dTDP + ADP. It participates in pyrimidine metabolism; dTTP biosynthesis. In terms of biological role, catalyzes the conversion of dTMP to dTDP. The chain is Putative thymidylate kinase from Acidianus convivator (ABV).